The primary structure comprises 394 residues: NAD(P)H-quinone oxidoreductase subunit H (394 aa).

The protein belongs to the complex I 49 kDa subunit family. In terms of assembly, NDH-1 can be composed of about 15 different subunits; different subcomplexes with different compositions have been identified which probably have different functions.

It localises to the cellular thylakoid membrane. The catalysed reaction is a plastoquinone + NADH + (n+1) H(+)(in) = a plastoquinol + NAD(+) + n H(+)(out). It carries out the reaction a plastoquinone + NADPH + (n+1) H(+)(in) = a plastoquinol + NADP(+) + n H(+)(out). Functionally, NDH-1 shuttles electrons from an unknown electron donor, via FMN and iron-sulfur (Fe-S) centers, to quinones in the respiratory and/or the photosynthetic chain. The immediate electron acceptor for the enzyme in this species is believed to be plastoquinone. Couples the redox reaction to proton translocation, and thus conserves the redox energy in a proton gradient. Cyanobacterial NDH-1 also plays a role in inorganic carbon-concentration. This is NAD(P)H-quinone oxidoreductase subunit H from Synechococcus sp. (strain RCC307).